Here is a 322-residue protein sequence, read N- to C-terminus: UDP-N-acetylenolpyruvoylglucosamine reductase (322 aa).

Positions 36 to 202 (RAGGPAQVLF…TSVLFEGVPG (167 aa)) constitute an FAD-binding PCMH-type domain. Residue Arg-182 is part of the active site. Ser-231 functions as the Proton donor in the catalytic mechanism. Residue Glu-301 is part of the active site.

The protein belongs to the MurB family. It depends on FAD as a cofactor.

It localises to the cytoplasm. It carries out the reaction UDP-N-acetyl-alpha-D-muramate + NADP(+) = UDP-N-acetyl-3-O-(1-carboxyvinyl)-alpha-D-glucosamine + NADPH + H(+). Its pathway is cell wall biogenesis; peptidoglycan biosynthesis. Cell wall formation. This Brucella suis (strain ATCC 23445 / NCTC 10510) protein is UDP-N-acetylenolpyruvoylglucosamine reductase.